Reading from the N-terminus, the 169-residue chain is Endoribonuclease YbeY (169 aa).

The tract at residues 72 to 95 is disordered; sequence GPVAAPRQEPDSPPACRKDSSHAE. The Zn(2+) site is built by His-131, His-135, and His-141.

The protein belongs to the endoribonuclease YbeY family. It depends on Zn(2+) as a cofactor.

The protein resides in the cytoplasm. Functionally, single strand-specific metallo-endoribonuclease involved in late-stage 70S ribosome quality control and in maturation of the 3' terminus of the 16S rRNA. In Oleidesulfovibrio alaskensis (strain ATCC BAA-1058 / DSM 17464 / G20) (Desulfovibrio alaskensis), this protein is Endoribonuclease YbeY.